A 354-amino-acid polypeptide reads, in one-letter code: 3-dehydroquinate synthase (354 aa).

NAD(+) is bound by residues 66–71, 100–104, 124–125, Lys-136, Lys-145, and 163–166; these read SGETSK, GATGD, TT, and FLET. The Zn(2+) site is built by Glu-178, His-242, and His-256.

It belongs to the sugar phosphate cyclases superfamily. Dehydroquinate synthase family. Requires NAD(+) as cofactor. The cofactor is Co(2+). It depends on Zn(2+) as a cofactor.

The protein localises to the cytoplasm. The catalysed reaction is 7-phospho-2-dehydro-3-deoxy-D-arabino-heptonate = 3-dehydroquinate + phosphate. It functions in the pathway metabolic intermediate biosynthesis; chorismate biosynthesis; chorismate from D-erythrose 4-phosphate and phosphoenolpyruvate: step 2/7. In terms of biological role, catalyzes the conversion of 3-deoxy-D-arabino-heptulosonate 7-phosphate (DAHP) to dehydroquinate (DHQ). This Staphylococcus epidermidis (strain ATCC 35984 / DSM 28319 / BCRC 17069 / CCUG 31568 / BM 3577 / RP62A) protein is 3-dehydroquinate synthase.